The primary structure comprises 173 residues: MPLNIEDKKAVVAEVSAQVAKAQTIVVAEYRGITVGDLTKLRSTARQQGVYLRVLKNTLARRAVEGTPFASLAEQMTGPLIYGISEDAVSSAKVLNDFAKTNDKLVLRAGSYDGKVLDAAAVKALASIPSRDELIAQLLGVMQAPVSGFARLLAALAAKNAEGAPAEAEAAGA.

The protein belongs to the universal ribosomal protein uL10 family. As to quaternary structure, part of the ribosomal stalk of the 50S ribosomal subunit. The N-terminus interacts with L11 and the large rRNA to form the base of the stalk. The C-terminus forms an elongated spine to which L12 dimers bind in a sequential fashion forming a multimeric L10(L12)X complex.

Forms part of the ribosomal stalk, playing a central role in the interaction of the ribosome with GTP-bound translation factors. The polypeptide is Large ribosomal subunit protein uL10 (Cupriavidus necator (strain ATCC 17699 / DSM 428 / KCTC 22496 / NCIMB 10442 / H16 / Stanier 337) (Ralstonia eutropha)).